The primary structure comprises 190 residues: Histone H5 (190 aa).

The segment at 1 to 29 is disordered; that stretch reads MTESLVLSPAPAKPKRVKASRRSASHPTY. A compositionally biased stretch (basic residues) spans 13–24; sequence KPKRVKASRRSA. 4 positions are modified to phosphoserine: serine 23, serine 30, serine 146, and serine 167. The H15 domain occupies 25-98; sequence SHPTYSEMIA…GASGSFRLAK (74 aa). Residues 87 to 190 form a disordered region; that stretch reads GVGASGSFRL…SGARKSPKKK (104 aa). The span at 104 to 190 shows a compositional bias: basic residues; sequence RSPGKKKKAV…SGARKSPKKK (87 aa).

It belongs to the histone H1/H5 family. As to expression, erythroid cells.

Its subcellular location is the nucleus. It localises to the chromosome. Histone H5 performs the same function as H1, being necessary for the condensation of nucleosome chains into higher order structures, and replaces histone H1 in certain cells. This Gallus gallus (Chicken) protein is Histone H5.